Reading from the N-terminus, the 348-residue chain is Protein RecA (348 aa).

Position 66–73 (66–73 (GPESSGKT)) interacts with ATP.

Belongs to the RecA family.

It localises to the cytoplasm. Functionally, can catalyze the hydrolysis of ATP in the presence of single-stranded DNA, the ATP-dependent uptake of single-stranded DNA by duplex DNA, and the ATP-dependent hybridization of homologous single-stranded DNAs. It interacts with LexA causing its activation and leading to its autocatalytic cleavage. The polypeptide is Protein RecA (Burkholderia lata (strain ATCC 17760 / DSM 23089 / LMG 22485 / NCIMB 9086 / R18194 / 383)).